The chain runs to 3013 residues: Genome polyprotein (3013 aa).

Ser-2 is modified (N-acetylserine; by host). Residues 2–23 are interaction with STAT1; it reads STLPKPQKRNQRNTNRRPQDVK. The interaction with EIF2AK2/PKR stretch occupies residues 2–58; it reads STLPKPQKRNQRNTNRRPQDVKFPGGGQIVGGVYLLPRRGPRLGVRATRKTSERSQP. The interval 2 to 59 is interaction with DDX3X; that stretch reads STLPKPQKRNQRNTNRRPQDVKFPGGGQIVGGVYLLPRRGPRLGVRATRKTSERSQPR. The segment at 2–75 is disordered; the sequence is STLPKPQKRN…PKARRQTGRT (74 aa). At 2–168 the chain is on the cytoplasmic side; it reads STLPKPQKRN…EDGINYATGN (167 aa). 2 consecutive short sequence motifs (nuclear localization signal) follow at residues 5-13 and 38-43; these read PKPQKRNQR and PRRGPR. Positions 7-16 are enriched in basic residues; that stretch reads PQKRNQRNTN. Residues 32–47 show a composition bias toward low complexity; the sequence is GGVYLLPRRGPRLGVR. Position 53 is a phosphoserine; by host (Ser-53). Short sequence motifs (nuclear localization signal) lie at residues 58–64 and 66–71; these read PRGRRQP and PKARRQ. A compositionally biased stretch (basic residues) spans 58 to 72; the sequence is PRGRRQPIPKARRQT. Ser-99 and Ser-116 each carry phosphoserine; by host. Residues 112–152 form an important for endoplasmic reticulum and mitochondrial localization region; sequence PRRRSRNLGKVIDTLTCGFADLMGYIPVVGAPLGGVAAALA. Residues 122 to 173 are interaction with APOA2; that stretch reads VIDTLTCGFADLMGYIPVVGAPLGGVAAALAHGVRAVEDGINYATGNLPGCS. Positions 164 to 167 are important for lipid droplets localization; that stretch reads YATG. The helical transmembrane segment at 169–189 threads the bilayer; it reads LPGCSFSIFLLALLSCLTTPA. A propeptide spans 178–191 (ER anchor for the core protein, removed in mature form by host signal peptidase); that stretch reads LLALLSCLTTPASA. At 190 to 358 the chain is on the lumenal side; sequence SAVHYANKSG…TGGHWGILAG (169 aa). Residues Asn-196, Asn-209, Asn-234, and Asn-250 are each glycosylated (N-linked (GlcNAc...) asparagine; by host). The tract at residues 265-296 is important for fusion; it reads MVGAAAFCSAMYVGDLCGGIFLVGQLFSFNPR. A glycan (N-linked (GlcNAc...) asparagine; by host) is linked at Asn-305. Residues 359–379 traverse the membrane as a helical segment; sequence ILYYSMVANWAKVLCILFLFA. Topologically, residues 380–723 are lumenal; that stretch reads GVDATTRTTG…WEYVVLAFLL (344 aa). Residues 385–412 form an HVR1 region; that stretch reads TRTTGAQAARATLGFTGLFQTGAKQNIH. Asn-417, Asn-423, and Asn-430 each carry an N-linked (GlcNAc...) (high mannose) asparagine; by host glycan. 4 cysteine pairs are disulfide-bonded: Cys-429–Cys-553, Cys-452–Cys-459, Cys-487–Cys-495, and Cys-504–Cys-509. N-linked (GlcNAc...) asparagine; by host glycosylation occurs at Asn-448. An HVR2 region spans residues 475-479; the sequence is ANVSG. N-linked (GlcNAc...) asparagine; by host glycosylation occurs at Asn-476. The tract at residues 481–494 is CD81-binding 1; it reads SEDRPYCWHYAPRP. Asn-533 carries an N-linked (GlcNAc...) asparagine; by host glycan. The segment at 545-552 is CD81-binding 2; the sequence is PPAGAWYG. N-linked (GlcNAc...) asparagine; by host glycosylation occurs at Asn-557. 4 disulfides stabilise this stretch: Cys-565–Cys-570, Cys-579–Cys-583, Cys-595–Cys-618, and Cys-605–Cys-642. Asn-621 and Asn-643 each carry an N-linked (GlcNAc...) (high mannose) asparagine; by host glycan. Cys-650 and Cys-675 are disulfide-bonded. The tract at residues 658–669 is PKR/eIF2-alpha phosphorylation homology domain (PePHD); that stretch reads IEMSPLLFSTTE. A helical transmembrane segment spans residues 724-744; that stretch reads LADARICACLWMVLLISQVEA. Residues 745 to 755 are Lumenal-facing; that stretch reads ALENLIVLNAA. Residues 756 to 776 traverse the membrane as a helical segment; it reads SAASSQGWIYCLVFICCAWYI. Over 777–780 the chain is Cytoplasmic; sequence KGRV. A helical transmembrane segment spans residues 781-801; that stretch reads VPGATYAILHLWPLLLLVLAL. At 802-811 the chain is on the lumenal side; sequence PQRAYAQDRE. Residues 812 to 832 form a helical membrane-spanning segment; sequence QGASIGVVVIAAITIFTLTPA. The Cytoplasmic portion of the chain corresponds to 833–879; sequence YKTMLVHFLWWNQYFIARSEALIQQWVPSLRVRGGRDAVILLTCLLH. A helical transmembrane segment spans residues 880–900; that stretch reads PSLGFDITKMLLALLGPLYLL. At 901-926 the chain is on the lumenal side; the sequence is QVSLLRVPYYVRAHALLRVCILVRRV. Residues 901-1024 form the Peptidase C18 domain; it reads QVSLLRVPYY…DMKSMGWRLL (124 aa). The interval 902 to 1204 is protease NS2-3; sequence VSLLRVPYYV…PVENMETTMR (303 aa). Cys-920 is lipidated: S-palmitoyl cysteine; by host. A helical transmembrane segment spans residues 927 to 947; sequence AGGKYIQAALLKLGAWTGTYI. The segment at 927-947 is interaction with host SCPS1; it reads AGGKYIQAALLKLGAWTGTYI. At 948 to 1655 the chain is on the cytoplasmic side; sequence YDHLAPLSTW…CMAADLEVIT (708 aa). Catalysis depends on for protease NS2 activity; shared with dimeric partner residues His-950, Glu-970, and Cys-991. In terms of domain architecture, Peptidase S29 spans 1025-1206; that stretch reads APITAYCQQT…ENMETTMRSP (182 aa). Residues His-1081 and Asp-1105 each act as charge relay system; for serine protease NS3 activity in the active site. Residues Cys-1121 and Cys-1123 each coordinate Zn(2+). Ser-1163 serves as the catalytic Charge relay system; for serine protease NS3 activity. Zn(2+) contacts are provided by Cys-1169 and His-1173. The 153-residue stretch at 1215–1367 folds into the Helicase ATP-binding domain; that stretch reads PAVPQTYQVG…PNITETALPS (153 aa). 1228–1235 is an ATP binding site; that stretch reads APTGSGKS. Positions 1235 and 1315 each coordinate Mg(2+). The short motif at 1314 to 1317 is the DECH box element; it reads DECH. The 163-residue stretch at 1374 to 1536 folds into the Helicase C-terminal domain; it reads YGKAIPLECI…ELTPSETTVR (163 aa). The interval 1484 to 1496 is RNA-binding; that stretch reads QRRGRTGRGKPGV. A helical membrane pass occupies residues 1656–1676; the sequence is STWVLAGGIVAALAAYCLTVG. Residues 1677–1688 form an NS3-binding region; it reads SVVICGRIVTSG. The Cytoplasmic portion of the chain corresponds to 1677–1803; the sequence is SVVICGRIVT…ALTSPLSTST (127 aa). A helical transmembrane segment spans residues 1804–1824; that stretch reads TLLLNILGGWVASQLAPPTAS. At 1825 to 1826 the chain is on the lumenal side; it reads TA. A helical transmembrane segment spans residues 1827–1847; that stretch reads FVVSGLAGAAVGSIGLGKVII. Asp-1848 is a topological domain (cytoplasmic). The chain crosses the membrane as a helical span at residues 1849-1869; sequence ILAGYGAGVSGALVAFKIMSG. Residues 1870–1879 lie on the Lumenal side of the membrane; that stretch reads EAPAVEDMVN. A helical membrane pass occupies residues 1880–1900; sequence LLPALLSPGALVVGVVCAAVL. Residues 1901–1970 lie on the Cytoplasmic side of the membrane; that stretch reads RRHVGPSEGA…WISGDWSAPC (70 aa). Cys-1970 carries S-palmitoyl cysteine; by host lipidation. Residues 1971–2000 lie within the membrane without spanning it; sequence SCSWLKDVWDWVCTVLSDFKTWLRAKLVPT. At 2001-2992 the chain is on the cytoplasmic side; that stretch reads LPGIPFISCQ…FHSVSRARPR (992 aa). Residues Cys-2009, Cys-2027, Cys-2029, and Cys-2050 each contribute to the Zn(2+) site. The interval 2118–2206 is FKBP8-binding; sequence EFFTEVDGVR…ASSSASQLSA (89 aa). The segment at 2118 to 2331 is transcriptional activation; it reads EFFTEVDGVR…PVPPPRKKRV (214 aa). An interaction with non-structural protein 4A region spans residues 2133–2137; it reads PPCRP. The interval 2187–2440 is interaction with host SKP2; sequence RLARGSPPSL…ALITPCAAEE (254 aa). A phosphoserine; by host mark is found at Ser-2192, Ser-2195, Ser-2199, Ser-2202, Ser-2205, and Ser-2208. The segment at 2208-2247 is ISDR; that stretch reads SLKATCTTAGKHPDAELIEANLLWRQEVGGNITRVESENK. Residues 2208–2273 are interaction with EIF2AK2/PKR; it reads SLKATCTTAG…REISVGAECF (66 aa). An NS4B-binding region spans residues 2247–2305; the sequence is KIIVLDSFDPLIAETDDREISVGAECFNPPRPKFPPALPVWARPDYNPPLLQPWKAPDY. Residues 2298 to 2376 are V3; it reads QPWKAPDYEP…STLSSDMTPP (79 aa). Residues 2316 to 2411 form a disordered region; sequence PPKGLPPVPP…PDLSSGSWST (96 aa). Positions 2321 to 2324 match the SH3-binding motif; the sequence is PPVP. Positions 2326–2334 match the Nuclear localization signal motif; that stretch reads PRKKRVVQL. The segment covering 2347–2373 has biased composition (polar residues); it reads AQTSFPPSTATLSEDSGRETSTLSSDM. A compositionally biased stretch (basic and acidic residues) spans 2375–2385; the sequence is PPREEADRASD. Ser-2464 is modified (phosphoserine; by host). One can recognise a RdRp catalytic domain in the interval 2636-2754; sequence PMGFSYDTRC…ISESMGVAED (119 aa). Positions 2642, 2740, and 2741 each coordinate Mg(2+). The helical transmembrane segment at 2993–3013 threads the bilayer; that stretch reads NLLLCLLLLTVGVGIFLLPAR.

This sequence belongs to the hepacivirus polyprotein family. In terms of assembly, homooligomer. Interacts with E1 (via C-terminus). Interacts with the non-structural protein 5A. Interacts (via N-terminus) with host STAT1 (via SH2 domain); this interaction results in decreased STAT1 phosphorylation and ubiquitin-mediated proteasome-dependent STAT1 degradation, leading to decreased IFN-stimulated gene transcription. Interacts with host STAT3; this interaction constitutively activates STAT3. Interacts with host LTBR receptor. Interacts with host TNFRSF1A receptor and possibly induces apoptosis. Interacts with host HNRPK. Interacts with host YWHAE. Interacts with host UBE3A/E6AP. Interacts with host DDX3X. Interacts with host APOA2. Interacts with host RXRA protein. Interacts with host SP110 isoform 3/Sp110b; this interaction sequesters the transcriptional corepressor SP110 away from the nucleus. Interacts with host CREB3 nuclear transcription protein; this interaction triggers cell transformation. Interacts with host ACY3. Interacts with host C1QR1. Interacts with host RBM24; this interaction, which enhances the interaction of the mature core protein with 5'-UTR, may inhibit viral translation and favor replication. Interacts with host EIF2AK2/PKR; this interaction induces the autophosphorylation of EIF2AK2. Part of the viral assembly initiation complex composed of NS2, E1, E2, NS3, NS4A, NS5A and the mature core protein. Forms a heterodimer with envelope glycoprotein E2. Interacts with mature core protein. Interacts with protease NS2. The heterodimer E1/E2 interacts with host CLDN1; this interaction plays a role in viral entry into host cell. Interacts with host SPSB2 (via C-terminus). Part of the viral assembly initiation complex composed of NS2, E1, E2, NS3, NS4A, NS5A and the mature core protein. Interacts with host NEURL3; this interaction prevents E1 binding to glycoprotein E2. As to quaternary structure, forms a heterodimer with envelope glycoprotein E1. Interacts with host CD81 and SCARB1 receptors; these interactions play a role in viral entry into host cell. Interacts with host EIF2AK2/PKR; this interaction inhibits EIF2AK2 and probably allows the virus to evade the innate immune response. Interacts with host CD209/DC-SIGN and CLEC4M/DC-SIGNR. Interact with host SPCS1; this interaction is essential for viral particle assembly. Interacts with protease NS2. The heterodimer E1/E2 interacts with host CLDN1; this interaction plays a role in viral entry into host cell. Part of the viral assembly initiation complex composed of NS2, E1, E2, NS3, NS4A, NS5A and the mature core protein. Interacts with host SLC3A2/4F2hc; the interaction may facilitate viral entry into host cell. Interacts with human PLSCR1. In terms of assembly, homohexamer. Homoheptamer. Interacts with protease NS2. Homodimer. Interacts with host SPCS1; this interaction is essential for viral particle assembly. Interacts with envelope glycoprotein E1. Interacts with envelope glycoprotein E2. Interacts with viroporin p7. Interacts with serine protease/helicase NS3. Part of the replication complex composed of NS2, NS3, NS4A, NS4B, NS5A and the RNA-directed RNA polymerase embedded in an ER-derived membranous web. Part of the viral assembly initiation complex composed of NS2, E1, E2, NS3, NS4A, NS5A and the mature core protein. As to quaternary structure, interacts with protease NS2. Interacts with non-structural protein 4A; this interaction stabilizes the folding of NS3 serine protease. NS3-NS4A interaction is essential for NS3 activation and allows membrane anchorage of the latter. NS3/NS4A complex also prevents phosphorylation of host IRF3, thus preventing the establishment of dsRNA induced antiviral state. Interacts with host MAVS; this interaction leads to the cleavage and inhibition of host MAVS. Interacts with host TICAM1; this interaction leads to the cleavage and inhibition of host TICAM1. Interacts with host TANK-binding kinase/TBK1; this interaction results in the inhibition of the association between TBK1 and IRF3, which leads to the inhibition of IRF3 activation. Interacts with host RBM24. Part of the replication complex composed of NS2, NS3, NS4A, NS4B, NS5A and the RNA-directed RNA polymerase embedded in an ER-derived membranous web. Part of the viral assembly initiation complex composed of NS2, E1, E2, NS3, NS4A, NS5A and the mature core protein. In terms of assembly, interacts with NS3 serine protease; this interaction stabilizes the folding of NS3 serine protease. NS3-NS4A interaction is essential for NS3 activation and allows membrane anchorage of the latter. Interacts with non-structural protein 5A (via N-terminus). Part of the replication complex composed of NS2, NS3, NS4A, NS4B, NS5A and the RNA-directed RNA polymerase embedded in an ER-derived membranous web. Part of the viral assembly initiation complex composed of NS2, E1, E2, NS3, NS4A, NS5A and the mature core protein. Homomultimer. Interacts with non-structural protein NS5A. Interacts with host PLA2G4C; this interaction likely initiates the recruitment of replication complexes to lipid droplets. Interacts with host STING; this interaction disrupts the interaction between STING and TBK1 thereby suppressing the interferon signaling. Part of the replication complex composed of NS2, NS3, NS4A, NS4B, NS5A and the RNA-directed RNA polymerase embedded in an ER-derived membranous web. As to quaternary structure, monomer. Homodimer; dimerization is required for RNA-binding. Interacts with the mature core protein. Interacts (via N-terminus) with non-structural protein 4A. Interacts with non-structural protein 4B. Interacts (via region D2) with RNA-directed RNA polymerase. Part of the viral assembly initiation complex composed of NS2, E1, E2, NS3, NS4A, NS5A and the mature core protein. Part of the replication complex composed of NS2, NS3, NS4A, NS4B, NS5A and the RNA-directed RNA polymerase embedded in an ER-derived membranous web. Interacts with host GRB2. Interacts with host BIN1. Interacts with host PIK3R1. Interacts with host SRCAP. Interacts with host FKBP8. Interacts (via C-terminus) with host VAPB (via MSP domain). Interacts with host EIF2AK2/PKR; this interaction leads to disruption of EIF2AK2 dimerization by NS5A and probably allows the virus to evade the innate immune response. Interacts (via N-terminus) with host PACSIN2 (via N-terminus); this interaction attenuates protein kinase C alpha-mediated phosphorylation of PACSIN2 by disrupting the interaction between PACSIN2 and PRKCA. Interacts (via N-terminus) with host SRC kinase (via SH2 domain). Interacts with most Src-family kinases. Interacts with host IFI27 and SKP2; promotes the ubiquitin-mediated proteasomal degradation of NS5A. Interacts with host GPS2. Interacts with host TNFRSF21; this interaction allows the modulation by the virus of JNK, p38 MAPK, STAT3, and Akt signaling pathways in a DR6-dependent manner. Interacts (via N-terminus) with host CIDEB (via N-terminus); this interaction seems to regulate the association of HCV particles with APOE. Interacts with host CHKA/Choline Kinase-alpha; CHKA bridges host PI4KA and NS5A and potentiates NS5A-stimulated PI4KA activity, which then facilitates the targeting of the ternary complex to the ER for viral replication. Interacts with host SPSB2 (via C-terminus); this interaction targets NS5A for ubiquitination and degradation. Interacts with host RAB18; this interaction may promote the association of NS5A and other replicase components with lipid droplets. Interacts (via region D2) with host PPIA/CYPA; the interaction stimulates RNA-binding ability of NS5A and is dependent on the peptidyl-prolyl cis-trans isomerase activity of PPIA/CYPA. Interacts with host TRIM14; this interaction induces the degradation of NS5A. In terms of assembly, homooligomer. Interacts with non-structural protein 5A. Interacts with host VAPB. Interacts with host PRK2/PKN2. Interacts with host HNRNPA1 and SEPT6; these interactions facilitate viral replication. Part of the replication complex composed of NS2, NS3, NS4A, NS4B, NS5A and the RNA-directed RNA polymerase. The cofactor is Zn(2+). Requires Mg(2+) as cofactor. Post-translationally, specific enzymatic cleavages in vivo yield mature proteins. The structural proteins, core, E1, E2 and p7 are produced by proteolytic processing by host signal peptidases. The core protein precursor is synthesized as a 23 kDa, which is retained in the ER membrane through the hydrophobic signal peptide. Cleavage by the signal peptidase releases the 21 kDa mature core protein. The cleavage of the core protein precursor occurs between aminoacids 176 and 188 but the exact cleavage site is not known. Some degraded forms of the core protein appear as well during the course of infection. The other proteins (p7, NS2, NS3, NS4A, NS4B, NS5A and NS5B) are cleaved by the viral proteases. Autoprocessing between NS2 and NS3 is mediated by the NS2 cysteine protease catalytic domain and regulated by the NS3 N-terminal domain. Phosphorylated by host PKC and PKA. In terms of processing, ubiquitinated; mediated by UBE3A and leading to core protein subsequent proteasomal degradation. Post-translationally, highly N-glycosylated. Palmitoylation is required for NS2/3 autoprocessing and E2 recruitment to membranes. In terms of processing, palmitoylated. This modification may play a role in its polymerization or in protein-protein interactions. Post-translationally, phosphorylated on serines in a basal form termed p56. p58 is a hyperphosphorylated form of p56. p56 and p58 coexist in the cell in roughly equivalent amounts. Hyperphosphorylation is dependent on the presence of NS4A. Host CSNK1A1/CKI-alpha or RPS6KB1 kinases may be responsible for NS5A phosphorylation. Tyrosine phosphorylation is essential for the interaction with host SRC. In terms of processing, the N-terminus is phosphorylated by host PRK2/PKN2.

It is found in the host endoplasmic reticulum membrane. The protein resides in the host mitochondrion membrane. It localises to the virion. Its subcellular location is the host cytoplasm. The protein localises to the host nucleus. It is found in the host lipid droplet. The protein resides in the virion membrane. It localises to the host mitochondrion. Its subcellular location is the host cell membrane. The protein localises to the host perinuclear region. It catalyses the reaction Hydrolysis of four peptide bonds in the viral precursor polyprotein, commonly with Asp or Glu in the P6 position, Cys or Thr in P1 and Ser or Ala in P1'.. The catalysed reaction is a ribonucleoside 5'-triphosphate + H2O = a ribonucleoside 5'-diphosphate + phosphate + H(+). The enzyme catalyses ATP + H2O = ADP + phosphate + H(+). It carries out the reaction RNA(n) + a ribonucleoside 5'-triphosphate = RNA(n+1) + diphosphate. With respect to regulation, inhibited by the antiviral drug hexamethylene amiloride. Inhibition by amantadine appears to be genotype-dependent. Also inhibited by long-alkyl-chain iminosugar derivatives. Activity is up-regulated by PRK2/PKN2-mediated phosphorylation. Functionally, packages viral RNA to form a viral nucleocapsid, and promotes virion budding. Participates in the viral particle production as a result of its interaction with the non-structural protein 5A. Binds RNA and may function as a RNA chaperone to induce the RNA structural rearrangements taking place during virus replication. Modulates viral translation initiation by interacting with viral IRES and 40S ribosomal subunit. Affects various cell signaling pathways, host immunity and lipid metabolism. Prevents the establishment of cellular antiviral state by blocking the interferon-alpha/beta (IFN-alpha/beta) and IFN-gamma signaling pathways and by blocking the formation of phosphorylated STAT1 and promoting ubiquitin-mediated proteasome-dependent degradation of STAT1. Activates STAT3 leading to cellular transformation. Regulates the activity of cellular genes, including c-myc and c-fos. May repress the promoter of p53, and sequester CREB3 and SP110 isoform 3/Sp110b in the cytoplasm. Represses cell cycle negative regulating factor CDKN1A, thereby interrupting an important check point of normal cell cycle regulation. Targets transcription factors involved in the regulation of inflammatory responses and in the immune response: suppresses TNF-induced NF-kappa-B activation, and activates AP-1. Binds to dendritic cells (DCs) via C1QR1, resulting in down-regulation of T-lymphocytes proliferation. Alters lipid metabolism by interacting with hepatocellular proteins involved in lipid accumulation and storage. Induces up-regulation of FAS promoter activity, and thereby contributes to the increased triglyceride accumulation in hepatocytes (steatosis). In terms of biological role, forms a heterodimer with envelope glycoprotein E2, which mediates virus attachment to the host cell, virion internalization through clathrin-dependent endocytosis and fusion with host membrane. Fusion with the host cell is most likely mediated by both E1 and E2, through conformational rearrangements of the heterodimer required for fusion rather than a classical class II fusion mechanism. E1/E2 heterodimer binds host apolipoproteins such as APOB and ApoE thereby forming a lipo-viro-particle (LVP). APOE associated to the LVP allows the initial virus attachment to cell surface receptors such as the heparan sulfate proteoglycans (HSPGs), syndecan-1 (SDC1), syndecan-1 (SDC2), the low-density lipoprotein receptor (LDLR) and scavenger receptor class B type I (SCARB1). The cholesterol transfer activity of SCARB1 allows E2 exposure and binding of E2 to SCARB1 and the tetraspanin CD81. E1/E2 heterodimer binding on CD81 activates the epithelial growth factor receptor (EGFR) signaling pathway. Diffusion of the complex E1-E2-EGFR-SCARB1-CD81 to the cell lateral membrane allows further interaction with Claudin 1 (CLDN1) and occludin (OCLN) to finally trigger HCV entry. Forms a heterodimer with envelope glycoprotein E1, which mediates virus attachment to the host cell, virion internalization through clathrin-dependent endocytosis and fusion with host membrane. Fusion with the host cell is most likely mediated by both E1 and E2, through conformational rearrangements of the heterodimer required for fusion rather than a classical class II fusion mechanism. The interaction between envelope glycoprotein E2 and host apolipoprotein E/APOE allows the proper assembly, maturation and infectivity of the viral particles. This interaction is probably promoted via the up-regulation of cellular autophagy by the virus. E1/E2 heterodimer binds host apolipoproteins such as APOB and APOE thereby forming a lipo-viro-particle (LVP). APOE associated to the LVP allows the initial virus attachment to cell surface receptors such as the heparan sulfate proteoglycans (HSPGs), syndecan-1 (SDC1), syndecan-1 (SDC2), the low-density lipoprotein receptor (LDLR) and scavenger receptor class B type I (SCARB1). The cholesterol transfer activity of SCARB1 allows E2 exposure and binding of E2 to SCARB1 and the tetraspanin CD81. E1/E2 heterodimer binding on CD81 activates the epithelial growth factor receptor (EGFR) signaling pathway. Diffusion of the complex E1-E2-EGFR-SCARB1-CD81 to the cell lateral membrane allows further interaction with Claudin 1 (CLDN1) and occludin (OCLN) to finally trigger HCV entry. Inhibits host EIF2AK2/PKR activation, preventing the establishment of an antiviral state. Viral ligand for CD209/DC-SIGN and CLEC4M/DC-SIGNR, which are respectively found on dendritic cells (DCs), and on liver sinusoidal endothelial cells and macrophage-like cells of lymph node sinuses. These interactions allow the capture of circulating HCV particles by these cells and subsequent facilitated transmission to permissive cells such as hepatocytes and lymphocyte subpopulations. The interaction between E2 and host amino acid transporter complex formed by SLC3A2 and SLC7A5/LAT1 may facilitate viral entry into host cell. Its function is as follows. Ion channel protein that acts as a viroporin and plays an essential role in the assembly, envelopment and secretion of viral particles. Regulates the host cell secretory pathway, which induces the intracellular retention of viral glycoproteins and favors assembly of viral particles. Creates a pore in acidic organelles and releases Ca(2+) and H(+) in the cytoplasm of infected cells, leading to a productive viral infection. High levels of cytoplasmic Ca(2+) may trigger membrane trafficking and transport of viral ER-associated proteins to viroplasms, sites of viral genome replication. This ionic imbalance induces the assembly of the inflammasome complex, which triggers the maturation of pro-IL-1beta into IL-1beta through the action of caspase-1. Targets also host mitochondria and induces mitochondrial depolarization. In addition of its role as a viroporin, acts as a lipid raft adhesion factor. Functionally, cysteine protease required for the proteolytic auto-cleavage between the non-structural proteins NS2 and NS3. The N-terminus of NS3 is required for the function of NS2 protease (active region NS2-3). Promotes the initiation of viral particle assembly by mediating the interaction between structural and non-structural proteins. In terms of biological role, displays three enzymatic activities: serine protease with a chymotrypsin-like fold, NTPase and RNA helicase. NS3 serine protease, in association with NS4A, is responsible for the cleavages of NS3-NS4A, NS4A-NS4B, NS4B-NS5A and NS5A-NS5B. The NS3/NS4A complex prevents phosphorylation of host IRF3, thus preventing the establishment of dsRNA induced antiviral state. The NS3/NS4A complex induces host amino acid transporter component SLC3A2, thus contributing to HCV propagation. NS3 RNA helicase binds to RNA and unwinds both dsDNA and dsRNA in the 3' to 5' direction, and likely resolves RNA complicated stable secondary structures in the template strand. Binds a single ATP and catalyzes the unzipping of a single base pair of dsRNA. Inhibits host antiviral proteins TBK1 and IRF3 thereby preventing the establishment of an antiviral state. Cleaves host MAVS/CARDIF thereby preventing the establishment of an antiviral state. Cleaves host TICAM1/TRIF, thereby disrupting TLR3 signaling and preventing the establishment of an antiviral state. Peptide cofactor which forms a non-covalent complex with the N-terminal of NS3 serine protease. The NS3/NS4A complex prevents phosphorylation of host IRF3, thus preventing the establishment of dsRNA induced antiviral state. The NS3/NS4A complex induces host amino acid transporter component SLC3A2, thus contributing to HCV propagation. Its function is as follows. Induces a specific membrane alteration that serves as a scaffold for the virus replication complex. This membrane alteration gives rise to the so-called ER-derived membranous web that contains the replication complex. NS4B self-interaction contributes to its function in membranous web formation. Promotes host TRIF protein degradation in a CASP8-dependent manner thereby inhibiting host TLR3-mediated interferon signaling. Disrupts the interaction between STING and TBK1 contributing to the inhibition of interferon signaling. Functionally, phosphorylated protein that is indispensable for viral replication and assembly. Both hypo- and hyperphosphorylated states are required for the viral life cycle. The hyperphosphorylated form of NS5A is an inhibitor of viral replication. Involved in RNA-binding and especially in binding to the viral genome. Zinc is essential for RNA-binding. Participates in the viral particle production as a result of its interaction with the mature viral core protein. Its interaction with host VAPB may target the viral replication complex to vesicles. Down-regulates viral IRES translation initiation. Mediates interferon resistance, presumably by interacting with and inhibiting host EIF2AK2/PKR. Prevents BIN1-induced apoptosis. Acts as a transcriptional activator of some host genes important for viral replication when localized in the nucleus. Via the interaction with host PACSIN2, modulates lipid droplet formation in order to promote virion assembly. Modulates TNFRSF21/DR6 signaling pathway for viral propagation. In terms of biological role, RNA-dependent RNA polymerase that performs primer-template recognition and RNA synthesis during viral replication. Initiates RNA transcription/replication at a flavin adenine dinucleotide (FAD), resulting in a 5'- FAD cap on viral RNAs. In this way, recognition of viral 5' RNA by host pattern recognition receptors can be bypassed, thereby evading activation of antiviral pathways. This Hepatitis C virus genotype 6d (isolate VN235) (HCV) protein is Genome polyprotein.